The chain runs to 1101 residues: Protein unc-13 homolog (1101 aa).

Residues 663–804 (VSVFPAADSL…ASKDDLVPPV (142 aa)) form the MHD1 domain. One can recognise an MHD2 domain in the interval 941 to 1051 (QSRLEGLIEA…YETRELIDDL (111 aa)).

The protein belongs to the unc-13 family. In terms of tissue distribution, expressed in roots, cotyledons, leaves, stems and flowers. Expressed in guard cells and mesophyll cells of leaves.

The protein resides in the cytoplasm. It localises to the cell membrane. Functionally, controls the tethering of the proton ATPase AHA1 to the plasma membrane. Is essential for stomatal opening in response to low concentration of carbon dioxide and light. The sequence is that of Protein unc-13 homolog from Arabidopsis thaliana (Mouse-ear cress).